Consider the following 250-residue polypeptide: MTSSSSDRSPLASQLGEVPAPLYARVKQMIVSQIQSGAWPPHHRVPSESELVSQLGFSRMTINRALRELTSDGLLVRMQGVGTFVAEPKGQSALFEVHNIADEIAARGHRHRCQVITLGEEVAGPERALALDVREGQRVFHSLIVHYENDIPVQIEDRYVNAAVAPDYLKQDFTRQTPYAYLTQVAPLTEGEHVVEAILAEPAECKLLQIERGEPCLLIRRRTWSGRVAVTAARLLHPGSRHRLEGRFSS.

The HTH gntR-type domain maps to 20-88 (APLYARVKQM…QGVGTFVAEP (69 aa)). A DNA-binding region (H-T-H motif) is located at residues 48–67 (ESELVSQLGFSRMTINRALR).

It functions in the pathway amino-acid degradation; L-histidine degradation into L-glutamate [regulation]. Repressor which binds to the hutP region in the histidine utilization (hut) operon. It blocks the expression of all the hut genes in the absence of inducer. This is Histidine utilization repressor (hutC) from Pseudomonas aeruginosa (strain ATCC 15692 / DSM 22644 / CIP 104116 / JCM 14847 / LMG 12228 / 1C / PRS 101 / PAO1).